The sequence spans 357 residues: Probable cinnamyl alcohol dehydrogenase (357 aa).

A Zn(2+)-binding site is contributed by Cys-47. Position 49 (Ser-49) interacts with NADP(+). His-69, Glu-70, Cys-100, Cys-103, Cys-106, Cys-114, and Cys-163 together coordinate Zn(2+). Residues Thr-167, 188–193, 211–216, Thr-251, Gly-275, and 298–300 contribute to the NADP(+) site; these read GLGGVG, SSSDKK, and SFI.

The protein belongs to the zinc-containing alcohol dehydrogenase family. As to quaternary structure, homodimer. The cofactor is Zn(2+).

It carries out the reaction (E)-cinnamyl alcohol + NADP(+) = (E)-cinnamaldehyde + NADPH + H(+). The enzyme catalyses (E)-coniferol + NADP(+) = (E)-coniferaldehyde + NADPH + H(+). It catalyses the reaction (E)-sinapyl alcohol + NADP(+) = (E)-sinapaldehyde + NADPH + H(+). The catalysed reaction is (E)-4-coumaroyl alcohol + NADP(+) = (E)-4-coumaraldehyde + NADPH + H(+). It carries out the reaction (E)-caffeyl alcohol + NADP(+) = (E)-caffeyl aldehyde + NADPH + H(+). The protein operates within aromatic compound metabolism; phenylpropanoid biosynthesis. Its function is as follows. Involved in lignin biosynthesis. Catalyzes the final step specific for the production of lignin monomers. Catalyzes the NADPH-dependent reduction of coniferaldehyde, 5-hydroxyconiferaldehyde, sinapaldehyde, 4-coumaraldehyde and caffeyl aldehyde to their respective alcohols. The polypeptide is Probable cinnamyl alcohol dehydrogenase (CAD) (Pinus radiata (Monterey pine)).